Consider the following 142-residue polypeptide: Ribosomal RNA large subunit methyltransferase H (142 aa).

G89 is an S-adenosyl-L-methionine binding site.

The protein belongs to the RNA methyltransferase RlmH family. In terms of assembly, homodimer.

It is found in the cytoplasm. The enzyme catalyses pseudouridine(1915) in 23S rRNA + S-adenosyl-L-methionine = N(3)-methylpseudouridine(1915) in 23S rRNA + S-adenosyl-L-homocysteine + H(+). Specifically methylates the pseudouridine at position 1915 (m3Psi1915) in 23S rRNA. In Zymomonas mobilis subsp. mobilis (strain ATCC 31821 / ZM4 / CP4), this protein is Ribosomal RNA large subunit methyltransferase H.